We begin with the raw amino-acid sequence, 29 residues long: NAD(P)H-quinone oxidoreductase subunit 5, chloroplastic (29 aa).

The helical transmembrane segment at 1 to 15 threads the bilayer; the sequence is SGSIIHSMEANVGYS.

This sequence belongs to the complex I subunit 5 family. NDH is composed of at least 16 different subunits, 5 of which are encoded in the nucleus.

Its subcellular location is the plastid. The protein localises to the chloroplast thylakoid membrane. It carries out the reaction a plastoquinone + NADH + (n+1) H(+)(in) = a plastoquinol + NAD(+) + n H(+)(out). It catalyses the reaction a plastoquinone + NADPH + (n+1) H(+)(in) = a plastoquinol + NADP(+) + n H(+)(out). Its function is as follows. NDH shuttles electrons from NAD(P)H:plastoquinone, via FMN and iron-sulfur (Fe-S) centers, to quinones in the photosynthetic chain and possibly in a chloroplast respiratory chain. The immediate electron acceptor for the enzyme in this species is believed to be plastoquinone. Couples the redox reaction to proton translocation, and thus conserves the redox energy in a proton gradient. In Pseudotsuga menziesii (Douglas-fir), this protein is NAD(P)H-quinone oxidoreductase subunit 5, chloroplastic.